A 70-amino-acid polypeptide reads, in one-letter code: MWFEILPGLAIMGVCLVIPGVSTAYIHKFTNGGKEKRVARVQYQWYLMERDRRISGVNRYYVSKGLENID.

Residues 1-21 form a helical membrane-spanning segment; the sequence is MWFEILPGLAIMGVCLVIPGV.

Belongs to the complex I NDUFA1 subunit family. Complex I is composed of 45 different subunits.

The protein localises to the mitochondrion inner membrane. Functionally, accessory subunit of the mitochondrial membrane respiratory chain NADH dehydrogenase (Complex I), that is believed not to be involved in catalysis. Complex I functions in the transfer of electrons from NADH to the respiratory chain. The immediate electron acceptor for the enzyme is believed to be ubiquinone. This Mus musculus (Mouse) protein is NADH dehydrogenase [ubiquinone] 1 alpha subcomplex subunit 1 (Ndufa1).